Consider the following 559-residue polypeptide: Transcription factor tstO (559 aa).

Residues 23–50 (CDACQSAKVRCGREKPTCRRCQNQGKTC) constitute a DNA-binding region (zn(2)-C6 fungal-type). Disordered stretches follow at residues 166 to 316 (GPST…TGFS) and 453 to 477 (ASPP…ISTA). Over residues 222–232 (SSESLSLEPSS) the composition is skewed to low complexity. A compositionally biased stretch (polar residues) spans 255 to 267 (TRGSQKISPNPHS). Basic and acidic residues predominate over residues 268-279 (IDSRTSSRDKSF). Low complexity-rich tracts occupy residues 286-316 (STLG…TGFS) and 462-477 (NNNT…ISTA).

The protein resides in the nucleus. Functionally, transcription factore; part of the gene cluster that mediates the biosynthesis of the antihypercholesterolemic agents phomoidrides which are dimeric anhydrides. Probably regulates the expression of the genes from the cluster. The polypeptide is Transcription factor tstO (Talaromyces stipitatus (strain ATCC 10500 / CBS 375.48 / QM 6759 / NRRL 1006) (Penicillium stipitatum)).